Reading from the N-terminus, the 172-residue chain is MNSDFICLGIITSPHGIKGHVKIKTFTENPQNFTSYGKLTDGITTYEINIIQVVSKNTIIAKINNITSRTNAELLRNKKLFIEKTKLPNLIENEFYHSDLVGLQVILEDNNIFGTIKKIYNFGSCDIIEILLYNSKKSTMLPFSKDIFTHINTKERYVILKLPEIIGSNSGI.

The PRC barrel domain maps to 92–167; it reads ENEFYHSDLV…VILKLPEIIG (76 aa).

It belongs to the RimM family. Binds ribosomal protein uS19.

It localises to the cytoplasm. In terms of biological role, an accessory protein needed during the final step in the assembly of 30S ribosomal subunit, possibly for assembly of the head region. Essential for efficient processing of 16S rRNA. May be needed both before and after RbfA during the maturation of 16S rRNA. It has affinity for free ribosomal 30S subunits but not for 70S ribosomes. This is Ribosome maturation factor RimM from Ehrlichia ruminantium (strain Gardel).